Here is a 563-residue protein sequence, read N- to C-terminus: GTPase Obg (563 aa).

In terms of domain architecture, Obg spans 2-168; the sequence is SDFVDRVTVH…RDVILELKSI (167 aa). The 181-residue stretch at 169–349 folds into the OBG-type G domain; that stretch reads ADVALVGFPS…LNWALADLVT (181 aa). GTP-binding positions include 175–182, 200–204, 221–224, 301–304, and 330–332; these read GFPSAGKS, FTTLV, DVPG, NKVD, and STA. 2 residues coordinate Mg(2+): Ser182 and Thr202. An OCT domain is found at 383–469; sequence DEGGNALDFT…DRAVEFDWDP (87 aa). The interval 525-563 is disordered; sequence MMAERKAGHWADPSVDDDRHDETSLFGRGETADDEDVEQ.

Belongs to the TRAFAC class OBG-HflX-like GTPase superfamily. OBG GTPase family. As to quaternary structure, monomer. The cofactor is Mg(2+).

Its subcellular location is the cytoplasm. An essential GTPase which binds GTP, GDP and possibly (p)ppGpp with moderate affinity, with high nucleotide exchange rates and a fairly low GTP hydrolysis rate. Plays a role in control of the cell cycle, stress response, ribosome biogenesis and in those bacteria that undergo differentiation, in morphogenesis control. The chain is GTPase Obg from Bifidobacterium adolescentis (strain ATCC 15703 / DSM 20083 / NCTC 11814 / E194a).